Reading from the N-terminus, the 196-residue chain is Ribonuclease HII (196 aa).

Residues 4–196 (IWVCGVDEAG…PVRRVLEGSF (193 aa)) form the RNase H type-2 domain. Residues Asp10, Glu11, and Asp106 each coordinate a divalent metal cation.

The protein belongs to the RNase HII family. The cofactor is Mn(2+). Requires Mg(2+) as cofactor.

It is found in the cytoplasm. The enzyme catalyses Endonucleolytic cleavage to 5'-phosphomonoester.. Endonuclease that specifically degrades the RNA of RNA-DNA hybrids. The chain is Ribonuclease HII from Polynucleobacter asymbioticus (strain DSM 18221 / CIP 109841 / QLW-P1DMWA-1) (Polynucleobacter necessarius subsp. asymbioticus).